The following is a 239-amino-acid chain: Ribulose-1,5-bisphosphate 5-phosphatase (239 aa).

D8 (nucleophile) is an active-site residue. D8, D10, and D184 together coordinate Mg(2+). The Proton donor role is filled by D10. The segment at 205–239 (PSEESDATESADRAATERQADHSIDTLGELTDLVS) is disordered. Residues 214–228 (SADRAATERQADHSI) are compositionally biased toward basic and acidic residues.

It belongs to the HAD-like hydrolase superfamily. It depends on Mg(2+) as a cofactor. Mn(2+) serves as cofactor. The cofactor is Co(2+). Ni(2+) is required as a cofactor.

The catalysed reaction is D-ribulose 1,5-bisphosphate + H2O = D-ribulose 1-phosphate + phosphate. Its activity is regulated as follows. Requires both monovalent and divalent ions for optimal activity. Optimal KCl concentration is higher than 2.5 M. Phosphatase involved in the non-carboxylating pentose bisphosphate pathway, a nucleoside degradation pathway present in some halophilic archaea. Catalyzes the dephosphorylation of ribulose 1,5-bisphosphate (RuBP) to ribulose 1-phosphate (Ru1P). Shows a strict substrate specificity toward RuBP. The chain is Ribulose-1,5-bisphosphate 5-phosphatase from Halopiger xanaduensis (strain DSM 18323 / JCM 14033 / SH-6).